We begin with the raw amino-acid sequence, 176 residues long: Ribosome maturation factor RimM (176 aa).

Positions K99–N174 constitute a PRC barrel domain.

This sequence belongs to the RimM family. In terms of assembly, binds ribosomal protein uS19.

Its subcellular location is the cytoplasm. An accessory protein needed during the final step in the assembly of 30S ribosomal subunit, possibly for assembly of the head region. Essential for efficient processing of 16S rRNA. May be needed both before and after RbfA during the maturation of 16S rRNA. It has affinity for free ribosomal 30S subunits but not for 70S ribosomes. In Leptospira interrogans serogroup Icterohaemorrhagiae serovar copenhageni (strain Fiocruz L1-130), this protein is Ribosome maturation factor RimM.